Here is a 221-residue protein sequence, read N- to C-terminus: Urease accessory protein UreF (221 aa).

Belongs to the UreF family. UreD, UreF and UreG form a complex that acts as a GTP-hydrolysis-dependent molecular chaperone, activating the urease apoprotein by helping to assemble the nickel containing metallocenter of UreC. The UreE protein probably delivers the nickel.

The protein resides in the cytoplasm. Required for maturation of urease via the functional incorporation of the urease nickel metallocenter. The sequence is that of Urease accessory protein UreF from Microcystis aeruginosa (strain NIES-843 / IAM M-2473).